Consider the following 370-residue polypeptide: MSVHRDAIRGARSVVVKIGTTALTTPSGVFDRGRLHYLADAIEARMKAGSDVVIVSSGAIAAGIEPLKLTKRPADLATKQAAASVGQVALVNSWSAAFGRYDRTVGQVLLTAHDISMRVQHNNAQRTLDRLRALHAVAIVNENDTVATNEIRFGDNDRLSALVAHLVGADALILLSDIDGLYDGDPRKAPEDNPARFISEVSGPDDLADVTAGRGSHLGTGGMVSKLSSALLAADAGVPVLLAAAADAASALGDASVGTVFAPRPERMSARRFWVRYAAEASGTLTLDDGAVRAVVQQRRSLLPAGISAVSGRFFGGDVVELRDQENAMVARGVVAYDKAELATMLGRSTSDLPAEMRRPAVHADDLVAV.

Lys-17 contributes to the ATP binding site. Substrate is bound by residues Ser-57, Asp-144, and Asn-156. Residues 176 to 177 (SD) and 220 to 226 (TGGMVSK) contribute to the ATP site. The region spanning 282–360 (SGTLTLDDGA…SDLPAEMRRP (79 aa)) is the PUA domain.

This sequence belongs to the glutamate 5-kinase family.

Its subcellular location is the cytoplasm. It catalyses the reaction L-glutamate + ATP = L-glutamyl 5-phosphate + ADP. It participates in amino-acid biosynthesis; L-proline biosynthesis; L-glutamate 5-semialdehyde from L-glutamate: step 1/2. In terms of biological role, catalyzes the transfer of a phosphate group to glutamate to form L-glutamate 5-phosphate. The sequence is that of Glutamate 5-kinase from Mycolicibacterium gilvum (strain PYR-GCK) (Mycobacterium gilvum (strain PYR-GCK)).